The primary structure comprises 243 residues: UPF0502 protein Rmet_3697 (243 aa).

A compositionally biased stretch (low complexity) spans 1-11 (MTDTPDTPDTP). Residues 1 to 23 (MTDTPDTPDTPMATGASSRPPLR) form a disordered region.

This sequence belongs to the UPF0502 family.

This Cupriavidus metallidurans (strain ATCC 43123 / DSM 2839 / NBRC 102507 / CH34) (Ralstonia metallidurans) protein is UPF0502 protein Rmet_3697.